Consider the following 370-residue polypeptide: 3-isopropylmalate dehydrogenase 1 (370 aa).

Residues Arg-98, Arg-108, Arg-136, and Asp-227 each coordinate substrate. 3 residues coordinate Mg(2+): Asp-227, Asp-251, and Asp-255. 289-301 provides a ligand contact to NAD(+); that stretch reads GSAPDIAGQGIAN.

Belongs to the isocitrate and isopropylmalate dehydrogenases family. LeuB type 1 subfamily. As to quaternary structure, homodimer. Mg(2+) is required as a cofactor. The cofactor is Mn(2+).

The protein resides in the cytoplasm. The enzyme catalyses (2R,3S)-3-isopropylmalate + NAD(+) = 4-methyl-2-oxopentanoate + CO2 + NADH. It participates in amino-acid biosynthesis; L-leucine biosynthesis; L-leucine from 3-methyl-2-oxobutanoate: step 3/4. Its function is as follows. Catalyzes the oxidation of 3-carboxy-2-hydroxy-4-methylpentanoate (3-isopropylmalate) to 3-carboxy-4-methyl-2-oxopentanoate. The product decarboxylates to 4-methyl-2 oxopentanoate. In Bordetella bronchiseptica (strain ATCC BAA-588 / NCTC 13252 / RB50) (Alcaligenes bronchisepticus), this protein is 3-isopropylmalate dehydrogenase 1.